We begin with the raw amino-acid sequence, 354 residues long: Trans-L-3-hydroxyproline dehydratase (354 aa).

Catalysis depends on C104, which acts as the Proton acceptor. Substrate is bound by residues 105–106, D269, and 274–275; these read GH and GS.

Belongs to the proline racemase family. In terms of assembly, homodimer.

It carries out the reaction trans-3-hydroxy-L-proline = 1-pyrroline-2-carboxylate + H2O. Functionally, catalyzes the dehydration of trans-3-hydroxy-L-proline to Delta(1)-pyrroline-2-carboxylate (Pyr2C). This is Trans-L-3-hydroxyproline dehydratase (L3HYPDH) from Bos taurus (Bovine).